The following is a 433-amino-acid chain: MADTSPRESKLNKQDQDLHLEIDETGLACKSEVKKRWLGARGTAGLYGNGKYYYEVTITSKGLCRVGWATLGGSLNIGKGLDSFGYGGTGMKSTHKKFDDYGLPFTLNDVIGCYLDLDSRTIWWSKNGEQFPAAFSIDVKYKNSNTCLFPAVLCQNSSLSVNFGSQPFKFPPGNQFTAVSDAPNENVNWWSYEEQNSFEHVVVKLPFAVEEDVHNEFRMHTKLMLTELKRTQCKQDKDGSIRRTLQPISKTICAFLNTDGGRLFLGVNDDKVIKGISMSKNMIYHFFGSLRHMCENFKPCSPLCRIKVSILEVIPVGVIKVKLRKADLLKEEAHDFPKLACHSVGGSFCDCFLEINKAPTKQYLLIIQVSPPNPNSRTTIFQNEEGLVYRRRMASNKCVYLDDLRRMMNEKNQVFVDLPDEARAEIDSFSKFD.

Positions 1–168 (MADTSPRESK…LSVNFGSQPF (168 aa)) constitute a B30.2/SPRY domain. Positions 199-400 (EHVVVKLPFA…RRMASNKCVY (202 aa)) are SLFN-like fold. Residues Glu-211 and Glu-216 contribute to the active site.

The protein belongs to the Schlafen family. As to quaternary structure, component of the trimeric PUCH (precursor of 21U RNA 5'-end cleavage holoenzyme) complex; consisting of tofu-1, tofu-2 and either slfl-3 or slfl-4. Within the complex, interacts (via N-terminus) with tofu-1 (via N-terminus); the interaction stabilizes tofu-2 and may form a functional nuclease. Within the complex, interacts (via N-terminus) with slfl-3 (via N-terminus); the presence of tofu-1 is required for this interaction. It depends on Mg(2+) as a cofactor. Expressed in the germline.

Its subcellular location is the cytoplasm. The protein resides in the mitochondrion. Inhibited by ethylenediaminetetraacetic acid (EDTA). In terms of biological role, component of the trimeric PUCH (precursor of 21U RNA 5'-end cleavage holoenzyme) complex, that acts as an endoribonuclease processing the 5'-end of precursor Piwi-interacting RNAs (piRNAs). The PUCH complex consists of tofu-1, tofu-2 and either slfl-3 or slfl-4, with tofu-2 exhibiting endoribonuclease activity. PUCH-mediated processing strictly requires a 7-methyl-G cap (m7 G-cap) and an uracil at position three (U3). PUCH also exhibits a strict bias for piRNA precursors with an A or G at position 1. Mature piRNA production is enhanced by the interaction of PUCH with the PETISCO complex, which is stabilizing piRNA precursors and allows their processing by PUCH. This chain is Schlafen-like protein 2, found in Caenorhabditis elegans.